A 188-amino-acid polypeptide reads, in one-letter code: MIDKEKIKKAVREILEAIGEDPDREGLLETPDRVARMYEEIFSGLHTDVKDVIKIFQEDEHQEIILVKDIPLYSMCEHHLLPFIGVAHVAYLPRKGRILGLSKVARIVDVLSKRPQLQERLTSEIADTIMEAVNPLGVAVVIEAEHLCMTMRGVKKPGSKTVTSALRGIFRTDQKARAEVMALINSKR.

Residues Cys-76, His-79, and Cys-148 each contribute to the Zn(2+) site.

The protein belongs to the GTP cyclohydrolase I family. In terms of assembly, toroid-shaped homodecamer, composed of two pentamers of five dimers.

It carries out the reaction GTP + H2O = 7,8-dihydroneopterin 3'-triphosphate + formate + H(+). Its pathway is cofactor biosynthesis; 7,8-dihydroneopterin triphosphate biosynthesis; 7,8-dihydroneopterin triphosphate from GTP: step 1/1. This chain is GTP cyclohydrolase 1, found in Caldanaerobacter subterraneus subsp. tengcongensis (strain DSM 15242 / JCM 11007 / NBRC 100824 / MB4) (Thermoanaerobacter tengcongensis).